Here is a 386-residue protein sequence, read N- to C-terminus: Epoxyqueuosine reductase (386 aa).

Residues R57, C97, D134, 139-141, S152, N155, I158, and L169 contribute to the cob(II)alamin site; that span reads SDR. The Proton donor role is filled by D134. The 31-residue stretch at 178–208 folds into the 4Fe-4S ferredoxin-type domain; that stretch reads FEPDVPIEDMCGSCTKCLDACPTGALVNPGQ. Positions 188, 191, 194, 198, and 214 each coordinate [4Fe-4S] cluster. Residue S216 coordinates cob(II)alamin. The tRNA site is built by Q220 and K222. Positions 240, 243, and 247 each coordinate [4Fe-4S] cluster. 240 to 241 provides a ligand contact to cob(II)alamin; the sequence is CD. N280, R281, R295, K297, and K298 together coordinate tRNA. The stretch at 333–357 is one HEAT-like PBS-type repeat; that stretch reads RGTAAWAIGKIGDPAYAEELEKALE.

This sequence belongs to the QueG family. Monomer. Cob(II)alamin serves as cofactor. The cofactor is [4Fe-4S] cluster.

The protein resides in the cytoplasm. It catalyses the reaction epoxyqueuosine(34) in tRNA + AH2 = queuosine(34) in tRNA + A + H2O. Its pathway is tRNA modification; tRNA-queuosine biosynthesis. Functionally, catalyzes the conversion of epoxyqueuosine (oQ) to queuosine (Q), which is a hypermodified base found in the wobble positions of tRNA(Asp), tRNA(Asn), tRNA(His) and tRNA(Tyr). The polypeptide is Epoxyqueuosine reductase (Bacillus subtilis (strain 168)).